We begin with the raw amino-acid sequence, 44 residues long: Cytochrome b559 subunit beta (44 aa).

Residues 19–35 form a helical membrane-spanning segment; that stretch reads WLAIHGIAVPTIFFLGA. Histidine 23 is a binding site for heme.

It belongs to the PsbE/PsbF family. In terms of assembly, heterodimer of an alpha subunit and a beta subunit. PSII is composed of 1 copy each of membrane proteins PsbA, PsbB, PsbC, PsbD, PsbE, PsbF, PsbH, PsbI, PsbJ, PsbK, PsbL, PsbM, PsbT, PsbX, PsbY, PsbZ, Psb30/Ycf12, at least 3 peripheral proteins of the oxygen-evolving complex and a large number of cofactors. It forms dimeric complexes. Requires heme b as cofactor.

It is found in the plastid. The protein localises to the chloroplast thylakoid membrane. In terms of biological role, this b-type cytochrome is tightly associated with the reaction center of photosystem II (PSII). PSII is a light-driven water:plastoquinone oxidoreductase that uses light energy to abstract electrons from H(2)O, generating O(2) and a proton gradient subsequently used for ATP formation. It consists of a core antenna complex that captures photons, and an electron transfer chain that converts photonic excitation into a charge separation. This Chlamydomonas reinhardtii (Chlamydomonas smithii) protein is Cytochrome b559 subunit beta.